Here is a 422-residue protein sequence, read N- to C-terminus: Serine--tRNA ligase (422 aa).

An L-serine-binding site is contributed by 229 to 231 (TAE). Position 260-262 (260-262 (RAE)) interacts with ATP. Glutamate 283 serves as a coordination point for L-serine. Residue 347–350 (EISS) coordinates ATP. L-serine is bound at residue serine 383.

It belongs to the class-II aminoacyl-tRNA synthetase family. Type-1 seryl-tRNA synthetase subfamily. Homodimer. The tRNA molecule binds across the dimer.

It is found in the cytoplasm. The catalysed reaction is tRNA(Ser) + L-serine + ATP = L-seryl-tRNA(Ser) + AMP + diphosphate + H(+). It catalyses the reaction tRNA(Sec) + L-serine + ATP = L-seryl-tRNA(Sec) + AMP + diphosphate + H(+). It participates in aminoacyl-tRNA biosynthesis; selenocysteinyl-tRNA(Sec) biosynthesis; L-seryl-tRNA(Sec) from L-serine and tRNA(Sec): step 1/1. Catalyzes the attachment of serine to tRNA(Ser). Is also able to aminoacylate tRNA(Sec) with serine, to form the misacylated tRNA L-seryl-tRNA(Sec), which will be further converted into selenocysteinyl-tRNA(Sec). The polypeptide is Serine--tRNA ligase (Halothermothrix orenii (strain H 168 / OCM 544 / DSM 9562)).